The primary structure comprises 56 residues: Large ribosomal subunit protein bL33 (56 aa).

The protein belongs to the bacterial ribosomal protein bL33 family.

The sequence is that of Large ribosomal subunit protein bL33 from Ehrlichia ruminantium (strain Gardel).